Here is a 61-residue protein sequence, read N- to C-terminus: Temporin-CG3 (61 aa).

The first 22 residues, 1–22 (MFTMKKPLLLLFFLATINLSLC), serve as a signal peptide directing secretion. The propeptide at 23-44 (EQERNAEEERRDEPDERNAEVE) is removed in mature form.

Belongs to the frog skin active peptide (FSAP) family. Temporin subfamily. Expressed by the skin glands.

It is found in the secreted. Functionally, antimicrobial peptide active against a variety of Gram-positive bacterial strains but not against Gram-negative bacteria. Has weak antifungal activity against a slime mold isolate. Has weak hemolytic activity against human erythrocytes. The chain is Temporin-CG3 from Amolops chunganensis (Chungan torrent frog).